Consider the following 267-residue polypeptide: Hydroxyethylthiazole kinase 2 (267 aa).

Position 41 (methionine 41) interacts with substrate. The ATP site is built by lysine 116 and threonine 166. Glycine 193 serves as a coordination point for substrate.

It belongs to the Thz kinase family. Requires Mg(2+) as cofactor.

It catalyses the reaction 5-(2-hydroxyethyl)-4-methylthiazole + ATP = 4-methyl-5-(2-phosphooxyethyl)-thiazole + ADP + H(+). Its pathway is cofactor biosynthesis; thiamine diphosphate biosynthesis; 4-methyl-5-(2-phosphoethyl)-thiazole from 5-(2-hydroxyethyl)-4-methylthiazole: step 1/1. Functionally, catalyzes the phosphorylation of the hydroxyl group of 4-methyl-5-beta-hydroxyethylthiazole (THZ). The chain is Hydroxyethylthiazole kinase 2 from Streptococcus pneumoniae serotype 4 (strain ATCC BAA-334 / TIGR4).